A 2336-amino-acid polypeptide reads, in one-letter code: Voltage-dependent N-type calcium channel subunit alpha-1B (2336 aa).

The interval 1–37 (MVRFGDELGGRYGGTGGGERARGGGAGGAGGPGQGGL) is disordered. At 1–90 (MVRFGDELGG…DNVVRKYAKR (90 aa)) the chain is on the cytoplasmic side. The span at 10–37 (GRYGGTGGGERARGGGAGGAGGPGQGGL) shows a compositional bias: gly residues. Arg22 is modified (omega-N-methylarginine). The I repeat unit spans residues 82–359 (NVVRKYAKRI…LVLGVLSGEF (278 aa)). The chain crosses the membrane as a helical span at residues 91-114 (ITEWPPFEYMILATIIANCIVLAL). At 115–131 (EQHLPDGDKTPMSERLD) the chain is on the extracellular side. A helical membrane pass occupies residues 132–152 (DTEPYFIGIFCFEAGIKIIAL). Residues 153–163 (GFVFHKGSYLR) lie on the Cytoplasmic side of the membrane. Residues 164-182 (NGWNVMDFVVVLTEILATA) form a helical membrane-spanning segment. Residues 183–187 (GTDFD) are Extracellular-facing. The helical transmembrane segment at 188 to 211 (LRTLRAVRVLRPLKLVSGIPSLQV) threads the bilayer. Residues 212-221 (VLKSIMKAMV) lie on the Cytoplasmic side of the membrane. A helical membrane pass occupies residues 222–244 (PLLQIGLLLFFAILMFAIIGLEF). Topologically, residues 245 to 331 (YMGKFHKACF…NTNDAAGNTW (87 aa)) are extracellular. A glycan (N-linked (GlcNAc...) asparagine) is linked at Asn256. The chain crosses the membrane as a helical span at residues 332 to 356 (NWLYFIPLIIIGSFFMLNLVLGVLS). The Cytoplasmic portion of the chain corresponds to 357–483 (GEFAKERERV…FLIRRMVKAQ (127 aa)). The binding to the beta subunit stretch occupies residues 379 to 396 (QQIERELNGYLEWIFKAE). Ser411 is modified (phosphoserine). 452–459 (ASLKSGKT) serves as a coordination point for ATP. An II repeat occupies 469–713 (EKMFRFLIRR…VFLAIAVDNL (245 aa)). Residues 484-502 (SFYWVVLCVVALNTLCVAM) form a helical membrane-spanning segment. At 503 to 512 (VHYNQPQRLT) the chain is on the extracellular side. The chain crosses the membrane as a helical span at residues 513 to 535 (TALYFAEFVFLGLFLTEMSLKMY). The Cytoplasmic portion of the chain corresponds to 536-545 (GLGPRSYFRS). A 1,2-diacyl-sn-glycero-3-phospho-(1D-myo-inositol-4,5-bisphosphate) is bound at residue Ser545. Residues 546–567 (SFNCFDFGVIVGSIFEVVWAAI) traverse the membrane as a helical segment. At 568–574 (KPGTSFG) the chain is on the extracellular side. A helical transmembrane segment spans residues 575-587 (ISVLRALRLLRIF). A 1,2-diacyl-sn-glycero-3-phospho-(1D-myo-inositol-4,5-bisphosphate) contacts are provided by Arg585 and Lys588. Residues 588 to 605 (KVTKYWNSLRNLVVSLLN) lie on the Cytoplasmic side of the membrane. The chain crosses the membrane as a helical span at residues 606–631 (SMKSIISLLFLLFLFIVVFALLGMQL). Over 632–683 (FGGQFNFQDETPTTNFDTFPAAILTVFQILTGEDWNAVMYHGIESQGGVSKG) the chain is Extracellular. The chain crosses the membrane as a helical span at residues 684–710 (MFSSFYFIVLTLFGNYTLLNVFLAIAV). The Cytoplasmic segment spans residues 711-1149 (DNLANAQELT…FCHYIVTMRY (439 aa)). 3 positions are modified to phosphoserine: Ser746, Ser749, and Ser784. 2 disordered regions span residues 800 to 1021 (YAST…HQPK) and 1051 to 1076 (EQPE…STTV). Basic and acidic residues-rich tracts occupy residues 806 to 827 (VRPD…RDGL), 870 to 891 (EQDR…EERA), 920 to 930 (GSPEEATEREP), 938 to 948 (HAQDSSKEGKE), 970 to 981 (GPRETENSEEPT), and 996 to 1021 (PPER…HQPK). Positions 1059-1076 (QRNVTRMGSQPSDPSTTV) are enriched in polar residues. Ser1067 bears the Phosphoserine mark. One copy of the III repeat lies at 1135–1421 (NLLRRFCHYI…IFVALIIITF (287 aa)). The chain crosses the membrane as a helical span at residues 1150–1168 (FEMVILVVIALSSIALAAE). The Extracellular segment spans residues 1169-1176 (DPVRTDSF). Residues 1177–1201 (RNNALKYMDYIFTGVFTFEMVIKMI) traverse the membrane as a helical segment. Over 1202-1215 (DLGLLLHPGAYFRD) the chain is Cytoplasmic. The chain crosses the membrane as a helical span at residues 1216-1240 (LWNILDFIVVSGALVAFAFSSFMGG). The Extracellular segment spans residues 1241–1246 (SKGKDI). Residues 1247–1267 (NTIKSLRVLRVLRPLKTIKRL) traverse the membrane as a helical segment. Topologically, residues 1268-1285 (PKLKAVFDCVVNSLKNVL) are cytoplasmic. Residues 1286–1305 (NILIVYMLFMFIFAVIAVQL) traverse the membrane as a helical segment. The Extracellular portion of the chain corresponds to 1306–1392 (FKGKFFYCTD…EQGPSPGFRM (87 aa)). The chain crosses the membrane as a helical span at residues 1393–1418 (ELSIFYVVYFVVFPFFFVNIFVALII). Over 1419-1473 (ITFQEQGDKVMSECSLEKNERACIDFAISAKPLTRYMPQNKQSFQYKTWTFVVSP) the chain is Cytoplasmic. An IV repeat occupies 1458-1711 (NKQSFQYKTW…LFVAVIMDNF (254 aa)). Residues 1474–1492 (PFEYFIMAMIALNTVVLMM) traverse the membrane as a helical segment. Residues 1493 to 1500 (KFYDAPYE) lie on the Extracellular side of the membrane. A helical transmembrane segment spans residues 1501-1525 (YELMLKCLNIVFTSMFSLECILKII). Residues 1526–1535 (AFGVLNYFRD) are Cytoplasmic-facing. A helical membrane pass occupies residues 1536 to 1557 (AWNVFDFVTVLGSITDILVTEI). The Extracellular portion of the chain corresponds to 1558–1563 (ANNFIN). A glycan (N-linked (GlcNAc...) asparagine) is linked at Asn1563. The helical transmembrane segment at 1564–1582 (LSFLRLFRAARLIKLCRQG) threads the bilayer. Residues 1583-1601 (YTIRILLWTFVQSFKALPY) lie on the Cytoplasmic side of the membrane. A helical transmembrane segment spans residues 1602–1621 (VCLLIAMLFFIYAIIGMQVF). The Extracellular portion of the chain corresponds to 1622–1683 (GNIALDDGTS…ANASECGSDF (62 aa)). N-linked (GlcNAc...) asparagine glycosylation occurs at Asn1675. Residues 1684–1707 (AYFYFVSFIFLCSFLMLNLFVAVI) traverse the membrane as a helical segment. Topologically, residues 1708–2336 (MDNFEYLTRD…YHHPDQDHWC (629 aa)) are cytoplasmic. Positions 1724 to 1759 (HHLDEFIRVWAEYDPAACGRISYNDMFEMLKHMSPP) constitute an EF-hand domain. 3 residues coordinate Ca(2+): Asp1737, Arg1743, and Asp1748. A disordered region spans residues 1981-2202 (TLRGPDGEPQ…TPRPSITYKT (222 aa)). Over residues 2048–2062 (SHHHHHRCHRRRDKK) the composition is skewed to basic residues. Ser2065 is modified (phosphoserine). Over residues 2097-2113 (CRRERKQERGRSQERRQ) the composition is skewed to basic and acidic residues. The segment covering 2161-2177 (GSGSVNGSPLMSTSGAS) has biased composition (polar residues). Phosphoserine is present on residues Ser2221, Ser2230, and Ser2253.

This sequence belongs to the calcium channel alpha-1 subunit (TC 1.A.1.11) family. CACNA1B subfamily. In terms of assembly, multisubunit complex consisting of alpha-1, alpha-2, beta and delta subunits in a 1:1:1:1 ratio. The channel activity is directed by the pore-forming and voltage-sensitive alpha-1 subunit. In many cases, this subunit is sufficient to generate voltage-sensitive calcium channel activity. The auxiliary subunits beta and alpha-2/delta linked by a disulfide bridge regulate the channel activity. Interacts with RIMS1. Interacts with FMR1 (via C-terminus); this interaction induces a decrease in the number of presynaptic functional CACNA1B channels at the cell surface. Phosphorylated in vitro by CaM-kinase II, PKA, PKC and CGPK. As to expression, central nervous system.

It localises to the membrane. It carries out the reaction Ca(2+)(in) = Ca(2+)(out). Is specifically blocked by omega-conotoxin GVIA. Is specifically blocked by omega-conotoxin MVIIA (ziconotide). Is insensitive to dihydropyridines (DHP). Its function is as follows. Voltage-sensitive calcium channels (VSCC) mediate the entry of calcium ions into excitable cells and are also involved in a variety of calcium-dependent processes, including muscle contraction, hormone or neurotransmitter release, gene expression, cell motility, cell division and cell death. This alpha-1B subunit gives rise to N-type calcium currents. N-type calcium channels belong to the 'high-voltage activated' (HVA) group. They are involved in pain signaling. Calcium channels containing alpha-1B subunit may play a role in directed migration of immature neurons. Mediates Ca(2+) release probability at hippocampal neuronal soma and synaptic terminals. The chain is Voltage-dependent N-type calcium channel subunit alpha-1B (Cacna1b) from Rattus norvegicus (Rat).